Reading from the N-terminus, the 404-residue chain is POU domain, class 2, transcription factor 3L (404 aa).

Disordered stretches follow at residues 1-29 (MNRE…TLDF) and 44-67 (TGIP…MTGE). A compositionally biased stretch (basic and acidic residues) spans 16 to 29 (GHLENDAERDTLDF). The region spanning 187-235 (QGDVGLAMGKLYGNDFSQTTISRFEALNLSFKNMCKLKPLLEKWLNDAE) is the POU-specific domain. Positions 259–297 (KRKKRTSIETNIRLTLEKRFQDNPKPSSEEISMIAEQLV) form a DNA-binding region, homeobox. Residues 346–367 (MTVTSSCSPGNSSRPSSPTCGL) form a disordered region. Over residues 350–363 (SSCSPGNSSRPSSP) the composition is skewed to low complexity.

Belongs to the POU transcription factor family. Class-2 subfamily.

The protein localises to the nucleus. In terms of biological role, transcription factor that binds to the octamer motif (5'-ATTTGCAT-3') and regulates cell type-specific differentiation pathways. This Xenopus laevis (African clawed frog) protein is POU domain, class 2, transcription factor 3L (pou2f3.L).